Here is a 363-residue protein sequence, read N- to C-terminus: Protein disulfide-isomerase 1 (363 aa).

The N-terminal stretch at 1–20 is a signal peptide; that stretch reads MKILLFVTLIALAFVALCSA. 2 consecutive Thioredoxin domains span residues 21 to 132 and 133 to 285; these read EGNV…NHAK and TNVK…AAAE. Residues Cys51, Cys54, Cys172, and Cys175 each act as nucleophile in the active site. Cystine bridges form between Cys51/Cys54 and Cys172/Cys175.

This sequence belongs to the protein disulfide isomerase family.

The protein resides in the endoplasmic reticulum lumen. The enzyme catalyses Catalyzes the rearrangement of -S-S- bonds in proteins.. Its function is as follows. Participates in the folding of proteins containing disulfide bonds, may be involved in glycosylation, prolyl hydroxylation and triglyceride transfer. This is Protein disulfide-isomerase 1 (pdi1) from Dictyostelium discoideum (Social amoeba).